A 136-amino-acid chain; its full sequence is Large ribosomal subunit protein uL16 (136 aa).

Belongs to the universal ribosomal protein uL16 family. As to quaternary structure, part of the 50S ribosomal subunit.

In terms of biological role, binds 23S rRNA and is also seen to make contacts with the A and possibly P site tRNAs. This is Large ribosomal subunit protein uL16 from Haemophilus ducreyi (strain 35000HP / ATCC 700724).